Reading from the N-terminus, the 73-residue chain is Mu-conotoxin SIIIA (73 aa).

Residues 1-20 (MMSKLGVLLTVCPLLFPLTA) form the signal peptide. Residues 20–40 (ALPPDGDQPADRPAERMQDDI) form a disordered region. Positions 21–49 (LPPDGDQPADRPAERMQDDISSDEHPLFD) are excised as a propeptide. Basic and acidic residues predominate over residues 28 to 40 (PADRPAERMQDDI). Q52 carries the pyrrolidone carboxylic acid modification. Cystine bridges form between C54-C64, C55-C70, and C59-C71. Cysteine amide is present on C71.

This sequence belongs to the conotoxin M superfamily. In terms of tissue distribution, expressed by the venom duct.

It is found in the secreted. Functionally, mu-conotoxins block voltage-gated sodium channels (Nav). This toxin moderately blocks rNav1.1/SCN1A, rNav1.2/SCN2A, rNav1.3/SCN3A, rNav1.4/SCN4A, and mNav1.6/SCN8A. In Conus striatus (Striated cone), this protein is Mu-conotoxin SIIIA.